A 454-amino-acid chain; its full sequence is NADP-specific glutamate dehydrogenase (454 aa).

Ser2 carries the N-acetylserine modification. Lys114 is a catalytic residue.

This sequence belongs to the Glu/Leu/Phe/Val dehydrogenases family. As to quaternary structure, homohexamer.

It carries out the reaction L-glutamate + NADP(+) + H2O = 2-oxoglutarate + NH4(+) + NADPH + H(+). This Neurospora sitophila (Chrysonilia sitophila) protein is NADP-specific glutamate dehydrogenase (GDH).